The chain runs to 190 residues: Somatotropin (190 aa).

His-19 serves as a coordination point for Zn(2+). Cys-52 and Cys-163 form a disulfide bridge. Ser-105 carries the post-translational modification Phosphoserine. Glu-172 contributes to the Zn(2+) binding site. A disulfide bridge links Cys-180 with Cys-188.

It belongs to the somatotropin/prolactin family.

Its subcellular location is the secreted. In terms of biological role, plays an important role in growth control. Its major role in stimulating body growth is to stimulate the liver and other tissues to secrete IGF1. It stimulates both the differentiation and proliferation of myoblasts. It also stimulates amino acid uptake and protein synthesis in muscle and other tissues. This chain is Somatotropin (GH1), found in Balaenoptera borealis (Sei whale).